The chain runs to 501 residues: Geissoschizine oxidase (501 aa).

A helical membrane pass occupies residues 1-21 (MEFSFSSPALYIVYFLLFFVV). Asn-60 is a glycosylation site (N-linked (GlcNAc...) asparagine). Residue Cys-442 coordinates heme.

This sequence belongs to the cytochrome P450 family. Heme serves as cofactor. In terms of tissue distribution, expressed in leaf epidermis. Also present in the leaf internal phloem-associated parenchyma (IPAP) inside the mesophyll.

It is found in the membrane. The catalysed reaction is (19E)-geissoschizine + reduced [NADPH--hemoprotein reductase] + O2 = akuammicine + formate + oxidized [NADPH--hemoprotein reductase] + H2O + H(+). It catalyses the reaction (19E)-geissoschizine + reduced [NADPH--hemoprotein reductase] + O2 = 3,17-didehydrostemmadenine + oxidized [NADPH--hemoprotein reductase] + 2 H2O. It participates in alkaloid biosynthesis. Component of the seco-iridoid and derivatives monoterpenoid indole alkaloids (MIAs, e.g. vincristine, quinine, and strychnine) biosynthesis pathway. Catalyzes the oxidation of 19E-geissoschizine to produce a short-lived MIA unstable intermediate which can be spontaneously converted into akuammicine or oxidized by Redox1 and Redox2 to produce stemmadenine and 16S/R-deshydroxymethylstemmadenine (16S/R-DHS). This chain is Geissoschizine oxidase, found in Catharanthus roseus (Madagascar periwinkle).